We begin with the raw amino-acid sequence, 299 residues long: Transcription factor MYB17 (299 aa).

HTH myb-type domains lie at 9 to 61 (KIGL…TNYL) and 62 to 116 (RPDI…KKRL). 2 DNA-binding regions (H-T-H motif) span residues 37-61 (WRTLPKLAGLLRCGKSCRLRWTNYL) and 89-112 (WAAIAAQLPGRTDNEIKNLWNTHL).

As to quaternary structure, interacts with LFY. As to expression, expressed in the shoot apex, young flower buds, developing carpels and siliques. Expressed in floral meristem, initiating floral primordia and developing flowers.

It is found in the nucleus. Functionally, transcription factor that may play a role in flower development by repressing ANT. Regulates the transition of meristem identity from vegetative growth to flowering. Acts downstream of LFY and upstream of AP1. Directly activates AP1 to promote floral fate. Together with LFY and AP1 may constitute a regulatory network that contributes to an abrupt and robust meristem identity transition. The polypeptide is Transcription factor MYB17 (Arabidopsis thaliana (Mouse-ear cress)).